Reading from the N-terminus, the 239-residue chain is Purine nucleoside phosphorylase DeoD-type (239 aa).

His5 serves as a coordination point for a purine D-ribonucleoside. Phosphate-binding positions include Gly21, Arg25, Arg44, and 88-91 (RVGS). A purine D-ribonucleoside contacts are provided by residues 180 to 182 (EME) and 204 to 205 (SD). The active-site Proton donor is the Asp205.

The protein belongs to the PNP/UDP phosphorylase family. In terms of assembly, homohexamer; trimer of homodimers.

The enzyme catalyses a purine D-ribonucleoside + phosphate = a purine nucleobase + alpha-D-ribose 1-phosphate. It carries out the reaction a purine 2'-deoxy-D-ribonucleoside + phosphate = a purine nucleobase + 2-deoxy-alpha-D-ribose 1-phosphate. In terms of biological role, catalyzes the reversible phosphorolytic breakdown of the N-glycosidic bond in the beta-(deoxy)ribonucleoside molecules, with the formation of the corresponding free purine bases and pentose-1-phosphate. The protein is Purine nucleoside phosphorylase DeoD-type of Myxococcus xanthus (strain DK1622).